We begin with the raw amino-acid sequence, 255 residues long: Menaquinone reductase, iron-sulfur cluster-binding subunit (255 aa).

3 consecutive 4Fe-4S ferredoxin-type domains span residues 11–41, 66–97, and 99–128; these read WGMVIDLDKCTGCGACMVACQAENNIAPQPD, HDVAYLPRPCMQCGKPSCVSVCPVVATDKNEE, and GIVSQVYPRCIGCRYCMASCPYHARYFNWF. [4Fe-4S] cluster contacts are provided by Cys20, Cys23, Cys26, Cys30, Cys75, Cys78, Cys83, Cys87, Cys108, Cys111, Cys114, and Cys118. 4 residues coordinate [3Fe-4S] cluster: Cys155, Cys158, Cys188, and Cys192.

The Qrc complex is composed of four subunits: QrcA, QrcB, QrcC and QrcD. Can form a supercomplex with the [NiFe] hydrogenase HynA1 and the tetraheme Type I cytochrome c3 TpIc(3), its physiological electron donors. [4Fe-4S] cluster serves as cofactor. Requires [3Fe-4S] cluster as cofactor.

Its subcellular location is the periplasm. In terms of biological role, component of the respiratory Qrc complex, that catalyzes the reduction of the menaquinone pool using electrons transferred from the reduced periplasmic cytochrome c3, and which is probably involved in sulfate respiration. Is likely essential for growth on H(2) or formate since the periplasmic hydrogenases and/or formate dehydrogenases act as primary electron donors for the Qrc complex. QrcC is an electron-transferring subunit; its cubane iron sulfur clusters form a pathway for electron transfer between the hemes of QrcA and the membrane quinone pool. In Nitratidesulfovibrio vulgaris (strain ATCC 29579 / DSM 644 / CCUG 34227 / NCIMB 8303 / VKM B-1760 / Hildenborough) (Desulfovibrio vulgaris), this protein is Menaquinone reductase, iron-sulfur cluster-binding subunit.